Here is a 278-residue protein sequence, read N- to C-terminus: Orotidine 5'-phosphate decarboxylase (278 aa).

The active-site Proton donor is the Lys-95.

Belongs to the OMP decarboxylase family. Type 2 subfamily.

The catalysed reaction is orotidine 5'-phosphate + H(+) = UMP + CO2. Its pathway is pyrimidine metabolism; UMP biosynthesis via de novo pathway; UMP from orotate: step 2/2. This is Orotidine 5'-phosphate decarboxylase from Corynebacterium glutamicum (strain ATCC 13032 / DSM 20300 / JCM 1318 / BCRC 11384 / CCUG 27702 / LMG 3730 / NBRC 12168 / NCIMB 10025 / NRRL B-2784 / 534).